Reading from the N-terminus, the 492-residue chain is Glutamyl-tRNA(Gln) amidotransferase subunit A (492 aa).

Residues K84 and S159 each act as charge relay system in the active site. S183 (acyl-ester intermediate) is an active-site residue.

The protein belongs to the amidase family. GatA subfamily. In terms of assembly, heterotrimer of A, B and C subunits.

The enzyme catalyses L-glutamyl-tRNA(Gln) + L-glutamine + ATP + H2O = L-glutaminyl-tRNA(Gln) + L-glutamate + ADP + phosphate + H(+). Allows the formation of correctly charged Gln-tRNA(Gln) through the transamidation of misacylated Glu-tRNA(Gln) in organisms which lack glutaminyl-tRNA synthetase. The reaction takes place in the presence of glutamine and ATP through an activated gamma-phospho-Glu-tRNA(Gln). This chain is Glutamyl-tRNA(Gln) amidotransferase subunit A, found in Anaeromyxobacter dehalogenans (strain 2CP-C).